The following is a 229-amino-acid chain: GTP cyclohydrolase 1 (229 aa).

A disordered region spans residues 1 to 26 (MDAKIKPLRGGKPADARPEFQPAELD). Zn(2+)-binding residues include Cys-118, His-121, and Cys-189.

It belongs to the GTP cyclohydrolase I family. Toroid-shaped homodecamer, composed of two pentamers of five dimers.

The enzyme catalyses GTP + H2O = 7,8-dihydroneopterin 3'-triphosphate + formate + H(+). Its pathway is cofactor biosynthesis; 7,8-dihydroneopterin triphosphate biosynthesis; 7,8-dihydroneopterin triphosphate from GTP: step 1/1. This chain is GTP cyclohydrolase 1, found in Rhodopseudomonas palustris (strain BisB5).